Consider the following 108-residue polypeptide: Transcription initiation factor IIA subunit 2 (108 aa).

The protein belongs to the TFIIA subunit 2 family. As to quaternary structure, TFIIA is a heterodimer of the large unprocessed subunit 1 and a small subunit gamma. It was originally believed to be a heterotrimer of an alpha, a beta and a gamma subunit. Interacts with NCOA6 general coactivator. TFIIA forms a complex with TBP.

Its subcellular location is the nucleus. In terms of biological role, TFIIA is a component of the transcription machinery of RNA polymerase II and plays an important role in transcriptional activation. TFIIA in a complex with TBP mediates transcriptional activity. In Oncorhynchus mykiss (Rainbow trout), this protein is Transcription initiation factor IIA subunit 2 (gtf2a2).